Consider the following 116-residue polypeptide: Iron-sulfur cluster insertion protein ErpA (116 aa).

Cys-44, Cys-108, and Cys-110 together coordinate iron-sulfur cluster.

The protein belongs to the HesB/IscA family. As to quaternary structure, homodimer. It depends on iron-sulfur cluster as a cofactor.

Its function is as follows. Required for insertion of 4Fe-4S clusters for at least IspG. This is Iron-sulfur cluster insertion protein ErpA from Shewanella amazonensis (strain ATCC BAA-1098 / SB2B).